The sequence spans 291 residues: Lectin (291 aa).

The N-terminal stretch at 1–28 (MGISKKSQLVPLLAFITMFLMVVSRVSS) is a signal peptide. Position 118 (Asp118) interacts with Ca(2+). Arg138 contacts a carbohydrate. Positions 147-162 (NIIKNSTNLDFNAAYN) are cleaved as a propeptide — removed in mature form. Mn(2+) is bound by residues Glu170 and Asp172. 4 residues coordinate Ca(2+): Asp172, Tyr174, Asn176, and Asp181. Residue Tyr174 coordinates a carbohydrate. The Mn(2+) site is built by Asp181 and His186. Lys208 contributes to the Ca(2+) binding site. Residue Ser228 participates in a carbohydrate binding. Residues 281–291 (QLQDLRIASVV) constitute a propeptide, removed in mature form.

The protein belongs to the leguminous lectin family. The mature chain consists of residues 163-280 followed by residues 29-147. Concanavalin A-like lectins of the Diocleinae subtribe undergo proteolytic processing referred to as circular permutation. The propeptide is split into an N-terminal and a C-terminal part, the gamma and beta chain, respectively. These are then religated in beta-gamma order to form the mature alpha chain. The beta and gamma chains can often be detected in cell extracts.

In terms of biological role, D-mannose-binding lectin that also binds alpha-methyl-D-mannoside with even higher affinity. Has hemagglutinating activity against rabbit erythrocytes. Shows toxicity against the brine shrimp A.nauplii. Induces reversible paw edema and hypernociceptivity in rats. This Dioclea lasiophylla protein is Lectin.